Consider the following 120-residue polypeptide: Large ribosomal subunit protein bL12 (120 aa).

This sequence belongs to the bacterial ribosomal protein bL12 family. In terms of assembly, homodimer. Part of the ribosomal stalk of the 50S ribosomal subunit. Forms a multimeric L10(L12)X complex, where L10 forms an elongated spine to which 2 to 4 L12 dimers bind in a sequential fashion. Binds GTP-bound translation factors.

Forms part of the ribosomal stalk which helps the ribosome interact with GTP-bound translation factors. Is thus essential for accurate translation. The protein is Large ribosomal subunit protein bL12 of Lactobacillus acidophilus (strain ATCC 700396 / NCK56 / N2 / NCFM).